The primary structure comprises 447 residues: Aladin (447 aa).

Residues 49–69 form a disordered region; that stretch reads STPSSLQENEGQENGDKASGE. WD repeat units lie at residues 97-138, 142-181, 210-250, and 252-291; these read LSEI…EPCI, DSQR…NMAL, QNDE…GTPI, and RGLG…SEPW.

Part of the nuclear pore complex (NPC). The NPC has an eight-fold symmetrical structure comprising a central transport channel and two rings, the cytoplasmic and nuclear rings, to which eight filaments are attached. The cytoplasmic filaments have loose ends, while the nuclear filaments are joined in a distal ring, forming a nuclear basket. NPCs are highly dynamic in configuration and composition, and can be devided in 3 subcomplexes, the NUP62 subcomplex, the NUP107-160 subcomplex and the NUP93 subcomplex, containing approximately 30 different nucleoporin proteins.

It localises to the nucleus envelope. Its subcellular location is the nucleus. It is found in the nuclear pore complex. In Arabidopsis thaliana (Mouse-ear cress), this protein is Aladin.